The sequence spans 1056 residues: MAGNDWINSYLEAILDVGGQGIDASTGKTSTAPPSLLLRERGHFSPSRYFVEEVISGFDETDLHRSWVRAASTRSPQERNTRLENLCWRIWNLARKKKQIEGEEAQRLAKRHVERERGRREATADMSEDLSEGERGDTVADMLFASESTKGRMRRISSVEMMDNWANTFKEKKLYVVLISLHGLIRGENMELGRDSDTGGQVKYVVELARALGSMPGVYRVDLLTRQVSAPGVDWSYGEPTEMLSSRNSENSTEQLGESSGAYIIRIPFGPKDKYVAKELLWPYIPEFVDGALSHIKQMSKVLGEQIGGGLPVWPASVHGHYADAGDSAALLSGALNVPMVFTGHSLGRDKLDQLLKQGRLSREEVDATYKIMRRIEAEELCLDASEIVITSTRQEIEEQWQLYHGFDLVLERKLRARMRRGVSCHGRFMPRMAKIPPGMEFNHIAPEDADMDTDIDGHKESNANPDPVIWSEIMRFFSNGRKPMILALARPDPKKNLTTLVKAFGECRPLRELANLTLIIGNRDDIDEMSTTSSSVLISILKLIDKYDLYGQVAYPKHHKQSDVPDIYRLAAKTKGVFINPAFIEPFGLTLIEAAAYGLPIVATKNGGPVDIIGVLDNGLLIDPHDQKSIADALLKLVADKHLWTKCRQNGLKNIHLFSWPEHCKNYLSRIASCKPRQPNWQRIDEGSENSDTDSAGDSLRDIQDISLNLKLSLDAERTEGGNSFDDSLDSEEANAKRKIENAVAKLSKSMDKAQVDVGNLKFPAIRRRKCIFVIALDCDVTSDLLQVIKTVISIVGEQRPTGSIGFILSTSMTLSEVDSLLDSGGLRPADFDAFICNSGSELYYPSTDYSESPFVLDQDYYSHIDYRWGGEGLWKTLVKWAASVNEKKGENAPNIVIADETSSTTHCYAFKVNDFTLAPPAKELRKMMRIQALRCHAIYCQNGTRLNVIPVLASRSQALRYLFMRWGVELSNFVVFVGESGDTDYEGLLGGVHKTVILKGIGSNTSNFHATRAYPMEHVMPVDSPNMFQTGGCNIDDISDALSKIGCLKAQKSL.

Residues 112–123 (HVERERGRREAT) are compositionally biased toward basic and acidic residues. Residues 112–132 (HVERERGRREATADMSEDLSE) are disordered. 2 positions are modified to phosphoserine: S158 and S424. The disordered stretch occupies residues 681 to 700 (NWQRIDEGSENSDTDSAGDS).

This sequence belongs to the glycosyltransferase 1 family. In terms of assembly, homodimer or homotetramer. In terms of processing, phosphorylated at Ser-158 and Ser-424.

The enzyme catalyses beta-D-fructose 6-phosphate + UDP-alpha-D-glucose = sucrose 6(F)-phosphate + UDP + H(+). The protein operates within glycan biosynthesis; sucrose biosynthesis; sucrose from D-fructose 6-phosphate and UDP-alpha-D-glucose: step 1/2. Activity is regulated by phosphorylation and moderated by concentration of metabolites and light. Plays a role in photosynthetic sucrose synthesis by catalyzing the rate-limiting step of sucrose biosynthesis from UDP-glucose and fructose- 6-phosphate. Involved in the regulation of carbon partitioning in the leaves of plants. May regulate the synthesis of sucrose and therefore play a major role as a limiting factor in the export of photoassimilates out of the leaf. Plays a role for sucrose availability that is essential for plant growth and fiber elongation. The chain is Sucrose-phosphate synthase (SPS1) from Spinacia oleracea (Spinach).